We begin with the raw amino-acid sequence, 651 residues long: Threonine--tRNA ligase (651 aa).

Residues 1–64 form the TGS domain; sequence MSSVVHVTLP…EKDCTLQVLT (64 aa). A catalytic region spans residues 245–535; that stretch reads DHRRLGPELG…LTEHYAGNFP (291 aa). Zn(2+) is bound by residues Cys336, His387, and His512.

It belongs to the class-II aminoacyl-tRNA synthetase family. Homodimer. Zn(2+) serves as cofactor.

It localises to the cytoplasm. The catalysed reaction is tRNA(Thr) + L-threonine + ATP = L-threonyl-tRNA(Thr) + AMP + diphosphate + H(+). Functionally, catalyzes the attachment of threonine to tRNA(Thr) in a two-step reaction: L-threonine is first activated by ATP to form Thr-AMP and then transferred to the acceptor end of tRNA(Thr). Also edits incorrectly charged L-seryl-tRNA(Thr). This chain is Threonine--tRNA ligase, found in Symbiobacterium thermophilum (strain DSM 24528 / JCM 14929 / IAM 14863 / T).